Consider the following 235-residue polypeptide: Glucosamine-6-phosphate deaminase (235 aa).

The Proton acceptor; for enolization step role is filled by aspartate 62. The active-site For ring-opening step is the asparagine 128. The Proton acceptor; for ring-opening step role is filled by histidine 130. Glutamate 135 serves as the catalytic For ring-opening step.

Belongs to the glucosamine/galactosamine-6-phosphate isomerase family. NagB subfamily.

The enzyme catalyses alpha-D-glucosamine 6-phosphate + H2O = beta-D-fructose 6-phosphate + NH4(+). It functions in the pathway amino-sugar metabolism; N-acetylneuraminate degradation; D-fructose 6-phosphate from N-acetylneuraminate: step 5/5. Functionally, catalyzes the reversible isomerization-deamination of glucosamine 6-phosphate (GlcN6P) to form fructose 6-phosphate (Fru6P) and ammonium ion. This chain is Glucosamine-6-phosphate deaminase, found in Lactococcus lactis subsp. lactis (strain IL1403) (Streptococcus lactis).